The following is a 299-amino-acid chain: Fructose-1,6-bisphosphatase class 1 (299 aa).

Mg(2+) contacts are provided by Glu-79, Asp-98, Leu-100, and Asp-101. Substrate contacts are provided by residues 101–104, Tyr-207, and Lys-238; that span reads DGSS. Glu-244 lines the Mg(2+) pocket.

It belongs to the FBPase class 1 family. In terms of assembly, homotetramer. Mg(2+) serves as cofactor.

It is found in the cytoplasm. It catalyses the reaction beta-D-fructose 1,6-bisphosphate + H2O = beta-D-fructose 6-phosphate + phosphate. It functions in the pathway carbohydrate biosynthesis; gluconeogenesis. This Campylobacter curvus (strain 525.92) protein is Fructose-1,6-bisphosphatase class 1.